We begin with the raw amino-acid sequence, 397 residues long: 2,3-bisphosphoglycerate-independent phosphoglycerate mutase (397 aa).

The protein belongs to the BPG-independent phosphoglycerate mutase family. A-PGAM subfamily.

The catalysed reaction is (2R)-2-phosphoglycerate = (2R)-3-phosphoglycerate. It functions in the pathway carbohydrate degradation; glycolysis; pyruvate from D-glyceraldehyde 3-phosphate: step 3/5. Catalyzes the interconversion of 2-phosphoglycerate and 3-phosphoglycerate. The polypeptide is 2,3-bisphosphoglycerate-independent phosphoglycerate mutase (apgM) (Methanosarcina mazei (strain ATCC BAA-159 / DSM 3647 / Goe1 / Go1 / JCM 11833 / OCM 88) (Methanosarcina frisia)).